We begin with the raw amino-acid sequence, 350 residues long: Ion-translocating oxidoreductase complex subunit D (350 aa).

4 consecutive transmembrane segments (helical) span residues 36–56 (FYFFGWGVLVQVMLAITIALL), 68–88 (PIISTLSDNSAVLTALLIGVS), 89–109 (IPSIAPWWVVVVGTIFAIVIV), and 120–140 (IFNPAMAAYVMLLISFPVQMT). At Thr185 the chain carries FMN phosphoryl threonine. Helical transmembrane passes span 212–232 (GFGVGWFWVNVAYLVGGLAML), 239–259 (WQISVGILAALFVCSSFGYLL), 265–285 (IGPLFQLFSGATMLAVFFIAT), 291–311 (ATSVRGRLLFGGLIGVLVYVI), and 315–335 (GGYPDAFAFAILLANLCAPFI).

This sequence belongs to the NqrB/RnfD family. The complex is composed of six subunits: RnfA, RnfB, RnfC, RnfD, RnfE and RnfG. FMN is required as a cofactor.

The protein resides in the cell inner membrane. Its function is as follows. Part of a membrane-bound complex that couples electron transfer with translocation of ions across the membrane. This is Ion-translocating oxidoreductase complex subunit D from Shewanella piezotolerans (strain WP3 / JCM 13877).